The primary structure comprises 212 residues: Dephospho-CoA kinase (212 aa).

Residues 4-204 (IVALTGGICS…RDYLKAEKTT (201 aa)) form the DPCK domain. 12-17 (CSGKSV) is a binding site for ATP.

Belongs to the CoaE family.

The protein localises to the cytoplasm. The catalysed reaction is 3'-dephospho-CoA + ATP = ADP + CoA + H(+). It functions in the pathway cofactor biosynthesis; coenzyme A biosynthesis; CoA from (R)-pantothenate: step 5/5. Catalyzes the phosphorylation of the 3'-hydroxyl group of dephosphocoenzyme A to form coenzyme A. The sequence is that of Dephospho-CoA kinase from Blochmanniella pennsylvanica (strain BPEN).